We begin with the raw amino-acid sequence, 569 residues long: Methionine--tRNA ligase (569 aa).

A 'HIGH' region motif is present at residues 11–21 (PYINGIKHLGN). Residues Cys-143, Cys-146, Cys-156, and Cys-159 each contribute to the Zn(2+) site. Residues 342 to 346 (KFSTS) carry the 'KMSKS' region motif. Thr-345 contributes to the ATP binding site.

This sequence belongs to the class-I aminoacyl-tRNA synthetase family. MetG type 1 subfamily. Monomer. The cofactor is Zn(2+).

The protein localises to the cytoplasm. It carries out the reaction tRNA(Met) + L-methionine + ATP = L-methionyl-tRNA(Met) + AMP + diphosphate. Its function is as follows. Is required not only for elongation of protein synthesis but also for the initiation of all mRNA translation through initiator tRNA(fMet) aminoacylation. The protein is Methionine--tRNA ligase of Caulobacter vibrioides (strain ATCC 19089 / CIP 103742 / CB 15) (Caulobacter crescentus).